Consider the following 146-residue polypeptide: SMR1 protein (146 aa).

The signal sequence occupies residues 1-22; the sequence is MKSLYLIFGLWILLACFQSGEG. Disordered regions lie at residues 23-43 and 99-146; these read VRGPRRQHNPRRQQDPSTLPH and TAPD…GGGK. The span at 109–139 shows a compositional bias: polar residues; the sequence is PPTQLHSTEQANTKTDAKISNTTATTQNSTD. 2 N-linked (GlcNAc...) asparagine glycosylation sites follow: Asn-129 and Asn-136.

Post-translationally, several O-linked glycosylation sites might be present in the C-terminal part. Expressed predominantly in the acinar cells of the submandibular gland and to lesser extent in the prostate.

Its subcellular location is the secreted. In terms of biological role, sialorphin may be involved in the modulation of mineral balance between at least four systems: kidney, bone, tooth and circulation. Submandibular gland peptide T is able to directly or indirectly down-regulate cardiovascular depression induced by septic shock (endotoxin stimuli), or anaphylactic challenge (nematode antigen sensitization). Its function is as follows. Sialorphin is an endogenous inhibitor of neprilysin. Inhibits the breakdown of Met-enkephalin and substance P in isolated tissue from the dorsal zone of the rat spinal cord. Has an analgesic effect when administered to rats by intravenous injection. The sequence is that of SMR1 protein (Vcsa1) from Rattus norvegicus (Rat).